The primary structure comprises 602 residues: Sulfite reductase [NADPH] hemoprotein beta-component (602 aa).

The disordered stretch occupies residues 1 to 23 (MDDTKTASPAPARAYETPPAERP). The [4Fe-4S] cluster site is built by cysteine 458, cysteine 464, cysteine 503, and cysteine 507. Cysteine 507 is a siroheme binding site.

It belongs to the nitrite and sulfite reductase 4Fe-4S domain family. Alpha(8)-beta(8). The alpha component is a flavoprotein, the beta component is a hemoprotein. Requires siroheme as cofactor. It depends on [4Fe-4S] cluster as a cofactor.

The enzyme catalyses hydrogen sulfide + 3 NADP(+) + 3 H2O = sulfite + 3 NADPH + 4 H(+). It functions in the pathway sulfur metabolism; hydrogen sulfide biosynthesis; hydrogen sulfide from sulfite (NADPH route): step 1/1. Its function is as follows. Component of the sulfite reductase complex that catalyzes the 6-electron reduction of sulfite to sulfide. This is one of several activities required for the biosynthesis of L-cysteine from sulfate. This chain is Sulfite reductase [NADPH] hemoprotein beta-component, found in Methylobacterium sp. (strain 4-46).